Consider the following 2596-residue polypeptide: MMLDRIMFLLFFILSLVIGSFSEYLDDKYYSTNSIDVVCKPCAVPSSNSVIWLPASRPPCLHPGQPIIHWPDLSDNLACPVPGLPDSVHSSQISLLEGEGLLLTKERICFFDGPIDFHYDYVCDGKLYRSKMRIGHSIASKKKLETRRTKRWARRRNPDANAVHFQQEKYVKELPEDTPIETIIASVKASHASSQPLYYSMVAPQDSRSQNLFTLDTMSGEIRLAKSMDREVLDKHILKVTAYERVDPTISASTTVVVHVLDVQDNSPIFEKDSYFGEIREDAPIGTTVLSVFARDLDSGENGEIEYSLGEGNGKNLLAINAKSGVIQTAAPLDRETLSLIRLDVIASDKGTPKRESTAMVEITVVDVNDNAPVFASDSYNVTILENITIPAVIATVKATDEDFGTNGKVHYSMASSSGIGGLTIDYSTGEVTLRERIDAKNSPITAVIRAKDGAQPALSSTVPLTINVIDINDHAPTLIAAQKMITLEENVAIGEEVGRVYAIDEDSGPNGIIKYSMEGSEDFIIDEDSGLIKTTKLLDRETTARYSLKVTARDMGTPSLNTSTTIAVVLKDINDNAPTFDKKEYNVTISEEMPRGSQIITLKAVDNDEDQKITYRIEEADREVFSILDIGDQGAILSVSGELKRQDHKVRVEISATDQGGLQGRCVVNVFIDDVNSAPYFNDHPFSVKIPEHSPIGYPVITLKAEDHDRGDNARIVYSIDSSQFFRIDPSSGDISVSSDLDREDRATFSVIVTASDHASPPLNTSTQIEVILDDINDNSPQFTSSSYAATISEDIPVGTSFLQVSAIDADIGPNGIVDYFLNESSSSPSIQLFRLDRTSGTLRVSSKLDREQFAVIVLPIFARDRGTPSLSAASEITLTLSDVNDNAPTFEQLSYDLYIAENSPVGSTVGTIVARDADEGDNADISFRIFGGADAKLFDIEEDAEQNGVVRILTRAEFDYEAKANKFFFELQASSGQLSSTVPVRIHVSDVNDNKPALKDFVILMNRFDNVQMARQIGFIPAFDPDQNATLEYFLEENDLIEAEKYTGKILVKQEWKRNMDVSFKTCVSDGANTECSTCRFIHVLVEPEWLSESFTLSLARMTVDDFWDPLVFQRFRDAMSTLSNWKPSDIHVIGVKQHLDDVIYINIAITDHGRVVRGWRAIELVKESIKKLEKMTLLQVEVIRDESCANEPCSHMAKCRQTQKFVGEMKAHETDNFIARTLNTVNTFVCECPSGFTSSGAHGDCDTRIDECYRGRCSNNSTCVAFENTYQCECKPGWIGRHCEISVHALTCVPGYCMSDSLCELDGNQMKCRHCKYHGEDTDERCRLRSVSFDGEGLLNVNLDLPRTQWTMKFRVSTIAHNGVLVFTGDKRSDFVEVSVVDRVLKVQFSLGGEKIDAKMENDVENRINDGEWHTVALEYSNKQITMSLDDCETNPSLLLNTSPNCAIRAKLNLEKKCEDPTVPCYRYLDISNGLFLGGRPGTSKQIEKAFSGCISDLSVDKEDVDFSTIKEMHKVGQVHEGCKHRKDFCSTSDGQCSATSKCVNRWGGRICSCPQSVHSTGECVGALGTQDLRGHSLFEEESFVLYQPSQVSVPFEVSFEFRTSRADMQVFALEFTQRSVHYNLEVDDGTLKYNIGDSEVELPAPEVTSKHWMNVVIKFEADSVATSINGIYSAEAKASISDMNLESLYFGIAPGTGHPSRFEGCIRNVLVDGRSISVKKKGKTRAGCVVPNRCSVDSICPAESTCHRAWNKHKCKCHKSFVGDTCLPVCSVANVCSSGTCVSSNTTAGYECICPAGKTGKNCQLEAPKQMCPSGWWGTFPRCRRCSCAQTKDYEAQCDKKTGACQCKKSHFSTINGCVKCECGFGADSTECSADGHCKCNGDAVGRRCDRCSRFDHQLDSKTLKCRPVSGKCPSEIEYSIQWPASQKGSIVRQSCPVGESGLATRKCLETGRWSDVNAWNCTRPEYSIMVNKFEILEPSKLLTMVANATNTESSIRGRNQQIAAEALSRLVDYEQSMPMKGRAHIKDMKFTEKLIESLGRVMSEQPADEYSTLISKLWNYAETVAEIHENVNFLSPFFVANDHIVFASDKLDFGNILPKFNNFVDLRPTGFPRVRAIVTGTTQVVYSIVPYPRCNRCENPMIAIVANTSDPVIVEFEIEEDDGWKYPECVRFDEKSGTWTARGAALIGLNLTHAACEYNRIGVFTMFVNDQSSSIVRVAQMDNMTSPAIAGVALFLCFLSILLTLSRRSLKTHSVRIGFILFFAINILNLFFVHKTAINQAYCPVRNAMLSFTSSAPFAWLFLYGLYIYRMLADGSSSPSLTTSLLVGIVFPCLISFTTFFVTDQCSLSPHLWLFWCIILPIGLFLLLSFYAAATSVLVSLHKKYDVFVAKYNVKRAVFQHFILTIFTLGMTLTGLFANQLPLPMEIMEISQSIIYLIAALVIFLWCVCDITTKASDSNPSMWLDNQKSVMAESTMADPQCASPLLSPRHQHHEVPMDSEWVPDVNPSNHYHTSINEPDTPRRLLLPQNRDVINILSSPDQILNEGVGHVYRNNMGSLPRLRSAQDEADDAYYTYTASRKYKNTTSTFNRE.

Positions 1-22 (MMLDRIMFLLFFILSLVIGSFS) are cleaved as a signal peptide. Residues 23–2229 (EYLDDKYYST…IVRVAQMDNM (2207 aa)) are Extracellular-facing. Cadherin domains follow at residues 166 to 270 (QQEK…SPIF), 271 to 375 (EKDS…APVF), 376 to 479 (ASDS…APTL), 480 to 581 (IAAQ…APTF), 582 to 682 (DKKE…APYF), 683 to 784 (NDHP…SPQF), 785 to 892 (TSSS…APTF), and 893 to 1000 (EQLS…KPAL). N-linked (GlcNAc...) asparagine glycans are attached at residues N381, N387, N562, N587, N765, and N824. N1030 and N1263 each carry an N-linked (GlcNAc...) asparagine glycan. Residues 1251-1287 (RIDECYRGRCSNNSTCVAFENTYQCECKPGWIGRHCE) enclose the EGF-like 1 domain. 12 disulfide bridges follow: C1255–C1266, C1260–C1275, C1277–C1286, C1497–C1526, C1533–C1546, C1540–C1555, C1557–C1567, C1709–C1732, C1738–C1750, C1744–C1759, C1761–C1770, and C1780–C1785. The region spanning 1333 to 1526 (SVSFDGEGLL…HKVGQVHEGC (194 aa)) is the Laminin G-like 1 domain. Positions 1529-1568 (RKDFCSTSDGQCSATSKCVNRWGGRICSCPQSVHSTGECV) constitute an EGF-like 2 domain. In terms of domain architecture, Laminin G-like 2 spans 1577 to 1732 (RGHSLFEEES…KKKGKTRAGC (156 aa)). EGF-like domains are found at residues 1734–1771 (VPNRCSVDSICPAESTCHRAWNKHKCKCHKSFVGDTCL) and 1776–1808 (VANVCSSGTCVSSNTTAGYECICPAGKTGKNCQ). N1789 is a glycosylation site (N-linked (GlcNAc...) asparagine). Residues C1798 and C1807 are joined by a disulfide bond. N-linked (GlcNAc...) asparagine glycans are attached at residues N1965, N1992, N2152, N2195, and N2228. A GAIN-B domain is found at 2054-2219 (EYSTLISKLW…TMFVNDQSSS (166 aa)). A disulfide bridge links C2174 with C2201. Positions 2174 to 2219 (CVRFDEKSGTWTARGAALIGLNLTHAACEYNRIGVFTMFVNDQSSS) are GPS. The chain crosses the membrane as a helical span at residues 2230-2250 (TSPAIAGVALFLCFLSILLTL). Residues 2251-2261 (SRRSLKTHSVR) lie on the Cytoplasmic side of the membrane. A helical membrane pass occupies residues 2262 to 2282 (IGFILFFAINILNLFFVHKTA). Residues 2283 to 2292 (INQAYCPVRN) are Extracellular-facing. The chain crosses the membrane as a helical span at residues 2293–2313 (AMLSFTSSAPFAWLFLYGLYI). Residues 2314-2326 (YRMLADGSSSPSL) are Cytoplasmic-facing. The helical transmembrane segment at 2327-2347 (TTSLLVGIVFPCLISFTTFFV) threads the bilayer. Over 2348-2356 (TDQCSLSPH) the chain is Extracellular. Residues 2357-2377 (LWLFWCIILPIGLFLLLSFYA) traverse the membrane as a helical segment. The Cytoplasmic portion of the chain corresponds to 2378–2401 (AATSVLVSLHKKYDVFVAKYNVKR). A helical membrane pass occupies residues 2402–2422 (AVFQHFILTIFTLGMTLTGLF). Topologically, residues 2423 to 2437 (ANQLPLPMEIMEISQ) are extracellular. A helical membrane pass occupies residues 2438-2458 (SIIYLIAALVIFLWCVCDITT). Residues 2459 to 2596 (KASDSNPSMW…KNTTSTFNRE (138 aa)) are Cytoplasmic-facing.

The protein belongs to the G-protein coupled receptor 2 family. LN-TM7 subfamily. As to expression, expressed in a region of neuropil around the nerve ring and the ventral cord (at protein level). Expressed in the head, tail, ventral cord, nerve ring and neurons including HSN neurons. Expressed in DA, VA, and VB and weakly in the DB cholinergic neurons. Not expressed in ventral D-type GABAergic motorneurons.

It localises to the cell membrane. The protein resides in the cell projection. It is found in the axon. Its subcellular location is the dendrite. Functionally, during ventral cord development, required for axon fasciculation and navigation, mediating both pioneer and follower axon extension, guidance and track formation. Acts in CEPsh glia and SubL neurons to guide follower axons into the nerve ring. Promotes motorneuron development by positively regulating the extension of the anterior neurite of ventral D-type GABAergic motorneurons along the anterior-posterior axis of the ventral nerve cord. Plays a role in synaptogenesis by regulating synaptic vesicle accumulation at GABAergic and cholinergic neuromuscular junctions. This is Cadherin EGF LAG seven-pass G-type receptor fmi-1 from Caenorhabditis elegans.